We begin with the raw amino-acid sequence, 389 residues long: Shewanella-like protein phosphatase 1 (389 aa).

A chloroplast-targeting transit peptide spans 1-53 (MASLYLNSLLPLPPSHPQKLLEPSSSSLLSTSNGNELALKPIVINGDPPTFVS). Asp-64, His-66, Asp-102, and Asn-137 together coordinate Mn(2+). His-138 functions as the Proton donor in the catalytic mechanism. Residues His-242 and His-314 each coordinate Mn(2+).

Belongs to the metallophosphoesterase superfamily. SLP family. It depends on Mn(2+) as a cofactor. As to expression, expressed in rosettes leaves, shoots and flowers (at protein level).

It localises to the plastid. Its subcellular location is the chloroplast. Its function is as follows. Shows phosphatase activity, hydrolyzing the artificial substrate para-nitrophenylphosphate (pNPP) in vitro. The sequence is that of Shewanella-like protein phosphatase 1 from Arabidopsis thaliana (Mouse-ear cress).